A 51-amino-acid chain; its full sequence is Large ribosomal subunit protein bL33 (51 aa).

The protein belongs to the bacterial ribosomal protein bL33 family.

This chain is Large ribosomal subunit protein bL33, found in Methylococcus capsulatus (strain ATCC 33009 / NCIMB 11132 / Bath).